The primary structure comprises 283 residues: Quinate/shikimate dehydrogenase (NAD(+)) (283 aa).

Serine 17, threonine 69, lysine 73, asparagine 94, and aspartate 110 together coordinate shikimate. L-quinate contacts are provided by residues 17 to 19 (SRT), threonine 69, lysine 73, asparagine 94, and aspartate 110. Residue lysine 73 is the Proton acceptor of the active site. NAD(+)-binding positions include 137 to 138 (GV), aspartate 158, arginine 163, 203 to 206 (PMGM), alanine 213, valine 228, and glycine 251. Residue glutamine 258 coordinates shikimate. L-quinate is bound at residue glutamine 258.

This sequence belongs to the shikimate dehydrogenase family. As to quaternary structure, homodimer.

The catalysed reaction is L-quinate + NAD(+) = 3-dehydroquinate + NADH + H(+). The enzyme catalyses shikimate + NAD(+) = 3-dehydroshikimate + NADH + H(+). The protein operates within metabolic intermediate biosynthesis; chorismate biosynthesis; chorismate from D-erythrose 4-phosphate and phosphoenolpyruvate: step 4/7. Its pathway is aromatic compound metabolism; 3,4-dihydroxybenzoate biosynthesis; 3-dehydroquinate from D-quinate (NAD(+) route). Its function is as follows. Involved in the biosynthesis of the chorismate, which leads to the biosynthesis of aromatic amino acids, and plays a key role in the quinate degradation pathway. Catalyzes the NAD(+)-dependent oxidation of both quinate and shikimate to 3-dehydroquinate and 3-dehydroshikimate, respectively. It can only use NAD. This is Quinate/shikimate dehydrogenase (NAD(+)) from Corynebacterium glutamicum (strain ATCC 13032 / DSM 20300 / JCM 1318 / BCRC 11384 / CCUG 27702 / LMG 3730 / NBRC 12168 / NCIMB 10025 / NRRL B-2784 / 534).